The primary structure comprises 570 residues: Proline--tRNA ligase (570 aa).

The protein belongs to the class-II aminoacyl-tRNA synthetase family. ProS type 1 subfamily. Homodimer.

It localises to the cytoplasm. The enzyme catalyses tRNA(Pro) + L-proline + ATP = L-prolyl-tRNA(Pro) + AMP + diphosphate. Catalyzes the attachment of proline to tRNA(Pro) in a two-step reaction: proline is first activated by ATP to form Pro-AMP and then transferred to the acceptor end of tRNA(Pro). As ProRS can inadvertently accommodate and process non-cognate amino acids such as alanine and cysteine, to avoid such errors it has two additional distinct editing activities against alanine. One activity is designated as 'pretransfer' editing and involves the tRNA(Pro)-independent hydrolysis of activated Ala-AMP. The other activity is designated 'posttransfer' editing and involves deacylation of mischarged Ala-tRNA(Pro). The misacylated Cys-tRNA(Pro) is not edited by ProRS. The protein is Proline--tRNA ligase of Wolinella succinogenes (strain ATCC 29543 / DSM 1740 / CCUG 13145 / JCM 31913 / LMG 7466 / NCTC 11488 / FDC 602W) (Vibrio succinogenes).